The chain runs to 299 residues: Protein tantalus (299 aa).

Positions 16–100 are disordered; it reads KDNRSPTTNS…RSSTFGARAG (85 aa). Residues 20-35 are compositionally biased toward polar residues; it reads SPTTNSNLSWQLNQMA. Residues 53 to 69 are compositionally biased toward acidic residues; it reads ESDDNVSSESHDSDDVD. The segment covering 84 to 93 has biased composition (low complexity); the sequence is CISGSSRRSS. Phosphoserine is present on residues Ser204 and Ser264.

In terms of assembly, binds to DNA in vitro. Interacts directly with Asx. Ubiquitously expressed in precellularized embryos. Then it decreases at cellular blastoderm to increase again during germ band extension. During germ band extension, it is highly expressed in somatic and visceral mesoderm. Ubiquitously expressed in imaginal disks. In ovary, it is expressed from stage 10.

The protein localises to the nucleus. It is found in the cytoplasm. It localises to the chromosome. Its function is as follows. Potential cofactor involved in sensory organ development. Despite its interaction with the Polycomb group protein Asx, it does not regulate the expression of homeotic genes. The sequence is that of Protein tantalus from Drosophila melanogaster (Fruit fly).